The following is a 347-amino-acid chain: UDP-3-O-acylglucosamine N-acyltransferase 1 (347 aa).

The active-site Proton acceptor is the histidine 246.

The protein belongs to the transferase hexapeptide repeat family. LpxD subfamily. As to quaternary structure, homotrimer.

The catalysed reaction is a UDP-3-O-[(3R)-3-hydroxyacyl]-alpha-D-glucosamine + a (3R)-hydroxyacyl-[ACP] = a UDP-2-N,3-O-bis[(3R)-3-hydroxyacyl]-alpha-D-glucosamine + holo-[ACP] + H(+). The protein operates within bacterial outer membrane biogenesis; LPS lipid A biosynthesis. Its function is as follows. Catalyzes the N-acylation of UDP-3-O-acylglucosamine using 3-hydroxyacyl-ACP as the acyl donor. Is involved in the biosynthesis of lipid A, a phosphorylated glycolipid that anchors the lipopolysaccharide to the outer membrane of the cell. The chain is UDP-3-O-acylglucosamine N-acyltransferase 1 from Francisella tularensis subsp. holarctica (strain LVS).